We begin with the raw amino-acid sequence, 345 residues long: Holliday junction branch migration complex subunit RuvB (345 aa).

Positions 1–183 are large ATPase domain (RuvB-L); the sequence is MTTQRLVSAA…FGIVHRLEFY (183 aa). ATP contacts are provided by residues I22, R23, G64, K67, T68, T69, 130-132, R173, Y183, and R220; that span reads EDY. T68 provides a ligand contact to Mg(2+). Residues 184 to 254 form a small ATPAse domain (RuvB-S) region; the sequence is SVEELSRIVA…VAGKALEMLD (71 aa). A head domain (RuvB-H) region spans residues 257-345; sequence PNGFDQSDRR…NVNEELFGDE (89 aa). Positions 293, 312, and 317 each coordinate DNA.

Belongs to the RuvB family. In terms of assembly, homohexamer. Forms an RuvA(8)-RuvB(12)-Holliday junction (HJ) complex. HJ DNA is sandwiched between 2 RuvA tetramers; dsDNA enters through RuvA and exits via RuvB. An RuvB hexamer assembles on each DNA strand where it exits the tetramer. Each RuvB hexamer is contacted by two RuvA subunits (via domain III) on 2 adjacent RuvB subunits; this complex drives branch migration. In the full resolvosome a probable DNA-RuvA(4)-RuvB(12)-RuvC(2) complex forms which resolves the HJ.

It is found in the cytoplasm. It catalyses the reaction ATP + H2O = ADP + phosphate + H(+). In terms of biological role, the RuvA-RuvB-RuvC complex processes Holliday junction (HJ) DNA during genetic recombination and DNA repair, while the RuvA-RuvB complex plays an important role in the rescue of blocked DNA replication forks via replication fork reversal (RFR). RuvA specifically binds to HJ cruciform DNA, conferring on it an open structure. The RuvB hexamer acts as an ATP-dependent pump, pulling dsDNA into and through the RuvAB complex. RuvB forms 2 homohexamers on either side of HJ DNA bound by 1 or 2 RuvA tetramers; 4 subunits per hexamer contact DNA at a time. Coordinated motions by a converter formed by DNA-disengaged RuvB subunits stimulates ATP hydrolysis and nucleotide exchange. Immobilization of the converter enables RuvB to convert the ATP-contained energy into a lever motion, pulling 2 nucleotides of DNA out of the RuvA tetramer per ATP hydrolyzed, thus driving DNA branch migration. The RuvB motors rotate together with the DNA substrate, which together with the progressing nucleotide cycle form the mechanistic basis for DNA recombination by continuous HJ branch migration. Branch migration allows RuvC to scan DNA until it finds its consensus sequence, where it cleaves and resolves cruciform DNA. This is Holliday junction branch migration complex subunit RuvB from Methylococcus capsulatus (strain ATCC 33009 / NCIMB 11132 / Bath).